Consider the following 217-residue polypeptide: ATP phosphoribosyltransferase (217 aa).

The protein belongs to the ATP phosphoribosyltransferase family. Short subfamily. Heteromultimer composed of HisG and HisZ subunits.

The protein localises to the cytoplasm. It catalyses the reaction 1-(5-phospho-beta-D-ribosyl)-ATP + diphosphate = 5-phospho-alpha-D-ribose 1-diphosphate + ATP. The protein operates within amino-acid biosynthesis; L-histidine biosynthesis; L-histidine from 5-phospho-alpha-D-ribose 1-diphosphate: step 1/9. Its function is as follows. Catalyzes the condensation of ATP and 5-phosphoribose 1-diphosphate to form N'-(5'-phosphoribosyl)-ATP (PR-ATP). Has a crucial role in the pathway because the rate of histidine biosynthesis seems to be controlled primarily by regulation of HisG enzymatic activity. The protein is ATP phosphoribosyltransferase of Parasynechococcus marenigrum (strain WH8102).